We begin with the raw amino-acid sequence, 752 residues long: DNA ligase (752 aa).

NAD(+) is bound by residues 48 to 52, 97 to 98, and E131; these read DADYD and SL. K133 functions as the N6-AMP-lysine intermediate in the catalytic mechanism. Residues R154, E189, K305, and K329 each contribute to the NAD(+) site. Positions 434, 437, 452, and 458 each coordinate Zn(2+). Positions 599–615 are enriched in basic and acidic residues; it reads ADEGRRASLQPQRDKAW. Positions 599–618 are disordered; that stretch reads ADEGRRASLQPQRDKAWADT. The BRCT domain maps to 673–752; sequence ATQSAVAGLT…EQWLDRIGDA (80 aa).

This sequence belongs to the NAD-dependent DNA ligase family. LigA subfamily. It depends on Mg(2+) as a cofactor. Mn(2+) serves as cofactor.

The enzyme catalyses NAD(+) + (deoxyribonucleotide)n-3'-hydroxyl + 5'-phospho-(deoxyribonucleotide)m = (deoxyribonucleotide)n+m + AMP + beta-nicotinamide D-nucleotide.. DNA ligase that catalyzes the formation of phosphodiester linkages between 5'-phosphoryl and 3'-hydroxyl groups in double-stranded DNA using NAD as a coenzyme and as the energy source for the reaction. It is essential for DNA replication and repair of damaged DNA. The chain is DNA ligase from Jannaschia sp. (strain CCS1).